A 111-amino-acid polypeptide reads, in one-letter code: Ribonuclease P protein component (111 aa).

Belongs to the RnpA family. In terms of assembly, consists of a catalytic RNA component (M1 or rnpB) and a protein subunit.

The catalysed reaction is Endonucleolytic cleavage of RNA, removing 5'-extranucleotides from tRNA precursor.. In terms of biological role, RNaseP catalyzes the removal of the 5'-leader sequence from pre-tRNA to produce the mature 5'-terminus. It can also cleave other RNA substrates such as 4.5S RNA. The protein component plays an auxiliary but essential role in vivo by binding to the 5'-leader sequence and broadening the substrate specificity of the ribozyme. The sequence is that of Ribonuclease P protein component from Streptococcus thermophilus (strain ATCC BAA-491 / LMD-9).